The sequence spans 271 residues: Phosphonoacetaldehyde hydrolase (271 aa).

Aspartate 12 acts as the Nucleophile in catalysis. Residues aspartate 12 and alanine 14 each contribute to the Mg(2+) site. The Schiff-base intermediate with substrate role is filled by lysine 54. Aspartate 188 is a Mg(2+) binding site.

It belongs to the HAD-like hydrolase superfamily. PhnX family. In terms of assembly, homodimer. The cofactor is Mg(2+).

It carries out the reaction phosphonoacetaldehyde + H2O = acetaldehyde + phosphate + H(+). Involved in phosphonate degradation. In Vibrio cholerae serotype O1 (strain ATCC 39541 / Classical Ogawa 395 / O395), this protein is Phosphonoacetaldehyde hydrolase.